Reading from the N-terminus, the 125-residue chain is Phosphoribosyl-AMP cyclohydrolase (125 aa).

D74 is a Mg(2+) binding site. C75 provides a ligand contact to Zn(2+). Mg(2+) is bound by residues D76 and D78. C92 and C99 together coordinate Zn(2+).

Belongs to the PRA-CH family. Homodimer. Mg(2+) serves as cofactor. Requires Zn(2+) as cofactor.

The protein resides in the cytoplasm. It carries out the reaction 1-(5-phospho-beta-D-ribosyl)-5'-AMP + H2O = 1-(5-phospho-beta-D-ribosyl)-5-[(5-phospho-beta-D-ribosylamino)methylideneamino]imidazole-4-carboxamide. The protein operates within amino-acid biosynthesis; L-histidine biosynthesis; L-histidine from 5-phospho-alpha-D-ribose 1-diphosphate: step 3/9. Functionally, catalyzes the hydrolysis of the adenine ring of phosphoribosyl-AMP. The polypeptide is Phosphoribosyl-AMP cyclohydrolase (Geotalea uraniireducens (strain Rf4) (Geobacter uraniireducens)).